We begin with the raw amino-acid sequence, 338 residues long: Mugineic-acid 3-dioxygenase (338 aa).

Positions 180-283 (DISGGRVVVD…RLSVASFIVP (104 aa)) constitute a Fe2OG dioxygenase domain. Fe cation-binding residues include His208, Asp210, and His264. Arg274 contributes to the 2-oxoglutarate binding site.

This sequence belongs to the iron/ascorbate-dependent oxidoreductase family. The cofactor is Fe(2+). L-ascorbate serves as cofactor. Expressed in roots, but not in leaves.

It catalyses the reaction mugineate + 2-oxoglutarate + O2 = 3-epihydroxymugineate + succinate + CO2 + H(+). The catalysed reaction is 2'-deoxymugineate + 2-oxoglutarate + O2 = 3-epihydroxy-2'-deoxymugineate + succinate + CO2 + H(+). Functionally, involved in the biosynthesis of mugineic acid family of phytosiderophores. Hydroxylates the C-3 positions of mugineic acid (MA) and 2'-deoxymugineic acid (DMA). May be involved in boron tolerance. This is Mugineic-acid 3-dioxygenase (IDS2) from Hordeum vulgare (Barley).